The sequence spans 540 residues: Collagen alpha-1(XXIII) chain (540 aa).

Gly residues predominate over residues 1-26; sequence MGPGERAGGGGDAGKGNAAGGGGGGR. Residues 1-28 form a disordered region; that stretch reads MGPGERAGGGGDAGKGNAAGGGGGGRSA. Residues 1–34 are Cytoplasmic-facing; that stretch reads MGPGERAGGGGDAGKGNAAGGGGGGRSATTAGSR. The helical; Signal-anchor for type II membrane protein transmembrane segment at 35–56 threads the bilayer; sequence AVSALCLLLSVGSAAACLLLGV. At 57 to 540 the chain is on the extracellular side; it reads QAAALQGRVA…GLPVPGCWHK (484 aa). 2 disordered regions span residues 109 to 304 and 316 to 540; these read AREA…GEQG and LDAL…CWHK. 5 Collagen-like domains span residues 124 to 243, 251 to 305, 321 to 380, 412 to 460, and 463 to 522; these read GRRG…PGKK, QPGP…EQGD, GPPG…MGLS, GPPG…GPPG, and GLPG…PGLD. Low complexity-rich tracts occupy residues 140–156 and 168–183; these read QSGRDGYPGPLGLDGKP and PGDFGPRGDQGQDGAA. A compositionally biased stretch (pro residues) spans 185–195; that stretch reads PPGPPGPPGAR. A compositionally biased stretch (pro residues) spans 322–334; it reads PPGPQGPPGPPGI. Residues 350–362 show a composition bias toward basic and acidic residues; it reads DGEKGPKGQKGDP. The span at 411–422 shows a compositional bias: pro residues; that stretch reads PGPPGPPGPPGP. 2 stretches are compositionally biased toward basic and acidic residues: residues 435–444 and 486–503; these read DGAKGEKGAS and RGEKGDRSERGEKGERGV.

Homotrimer. Undergoes proteolytic cleavage by furin protease to yield a 60 kDa soluble form that forms a homotrimer and exhibits a low affinity interaction with heparin.

The protein localises to the cell membrane. This is Collagen alpha-1(XXIII) chain (COL23A1) from Homo sapiens (Human).